The sequence spans 114 residues: MDPVDPEVPPWHHPGSQPQIPCNNCYCKRCCYHCYVCFVRKGLGISYGRKKRGRPAAASHPDHKDPVPKQSPTITKRKQERQEEQEEEVEKKAGPGGYPRRKGSCHCCTRTSEQ.

The interval 1-24 (MDPVDPEVPPWHHPGSQPQIPCNN) is interaction with human CREBBP. Residues 1–48 (MDPVDPEVPPWHHPGSQPQIPCNNCYCKRCCYHCYVCFVRKGLGISYG) are transactivation. Zn(2+)-binding residues include cysteine 22, cysteine 25, and cysteine 27. The tract at residues 22-37 (CNNCYCKRCCYHCYVC) is cysteine-rich. Residue lysine 28 is modified to N6-acetyllysine; by host PCAF. 4 residues coordinate Zn(2+): cysteine 30, histidine 33, cysteine 34, and cysteine 37. A core region spans residues 38–48 (FVRKGLGISYG). The tract at residues 48-114 (GRKKRGRPAA…CHCCTRTSEQ (67 aa)) is disordered. Residues 49-56 (RKKRGRPA) carry the Nuclear localization signal, RNA-binding (TAR), and protein transduction motif. The segment at 49 to 84 (RKKRGRPAAASHPDHKDPVPKQSPTITKRKQERQEE) is interaction with the host capping enzyme RNGTT. 2 positions are modified to N6-acetyllysine; by host EP300 and GCN5L2: lysine 50 and lysine 51. Position 52 is an asymmetric dimethylarginine; by host PRMT6 (arginine 52). A Glycyl lysine isopeptide (Lys-Gly) (interchain with G-Cter in ubiquitin) cross-link involves residue lysine 69.

This sequence belongs to the lentiviruses Tat family. In terms of assembly, interacts with host CCNT1. Associates with the P-TEFb complex composed at least of Tat, P-TEFb (CDK9 and CCNT1), TAR RNA, RNA Pol II. Recruits the HATs CREBBP, TAF1/TFIID, EP300, PCAF and GCN5L2. Interacts with host KAT5/Tip60; this interaction targets the latter to degradation. Interacts with the host deacetylase SIRT1. Interacts with host capping enzyme RNGTT; this interaction stimulates RNGTT. Binds to host KDR, and to the host integrins ITGAV/ITGB3 and ITGA5/ITGB1. Interacts with host KPNB1/importin beta-1 without previous binding to KPNA1/importin alpha-1. Interacts with EIF2AK2. Interacts with host nucleosome assembly protein NAP1L1; this interaction may be required for the transport of Tat within the nucleus, since the two proteins interact at the nuclear rim. Interacts with host C1QBP/SF2P32; this interaction involves lysine-acetylated Tat. Interacts with the host chemokine receptors CCR2, CCR3 and CXCR4. Interacts with host DPP4/CD26; this interaction may trigger an anti-proliferative effect. Interacts with host LDLR. Interacts with the host extracellular matrix metalloproteinase MMP1. Interacts with host PRMT6; this interaction mediates Tat's methylation. Interacts with, and is ubiquitinated by MDM2/Hdm2. Interacts with host PSMC3 and HTATIP2. Interacts with STAB1; this interaction may overcome SATB1-mediated repression of IL2 and IL2RA (interleukin) in T cells by binding to the same domain than HDAC1. Interacts (when acetylated) with human CDK13, thereby increasing HIV-1 mRNA splicing and promoting the production of the doubly spliced HIV-1 protein Nef. Interacts with host TBP; this interaction modulates the activity of transcriptional pre-initiation complex. Interacts with host RELA. Interacts with host PLSCR1; this interaction negatively regulates Tat transactivation activity by altering its subcellular distribution. In terms of processing, asymmetrical arginine methylation by host PRMT6 seems to diminish the transactivation capacity of Tat and affects the interaction with host CCNT1. Acetylation by EP300, CREBBP, GCN5L2/GCN5 and PCAF regulates the transactivation activity of Tat. EP300-mediated acetylation of Lys-50 promotes dissociation of Tat from the TAR RNA through the competitive binding to PCAF's bromodomain. In addition, the non-acetylated Tat's N-terminus can also interact with PCAF. PCAF-mediated acetylation of Lys-28 enhances Tat's binding to CCNT1. Lys-50 is deacetylated by SIRT1. Post-translationally, polyubiquitination by host MDM2 does not target Tat to degradation, but activates its transactivation function and fosters interaction with CCNT1 and TAR RNA. In terms of processing, phosphorylated by EIF2AK2 on serine and threonine residues adjacent to the basic region important for TAR RNA binding and function. Phosphorylation of Tat by EIF2AK2 is dependent on the prior activation of EIF2AK2 by dsRNA.

It is found in the host nucleus. Its subcellular location is the host nucleolus. The protein localises to the host cytoplasm. It localises to the secreted. Transcriptional activator that increases RNA Pol II processivity, thereby increasing the level of full-length viral transcripts. Recognizes a hairpin structure at the 5'-LTR of the nascent viral mRNAs referred to as the transactivation responsive RNA element (TAR) and recruits the cyclin T1-CDK9 complex (P-TEFb complex) that will in turn hyperphosphorylate the RNA polymerase II to allow efficient elongation. The CDK9 component of P-TEFb and other Tat-activated kinases hyperphosphorylate the C-terminus of RNA Pol II that becomes stabilized and much more processive. Other factors such as HTATSF1/Tat-SF1, SUPT5H/SPT5, and HTATIP2 are also important for Tat's function. Besides its effect on RNA Pol II processivity, Tat induces chromatin remodeling of proviral genes by recruiting the histone acetyltransferases (HATs) CREBBP, EP300 and PCAF to the chromatin. This also contributes to the increase in proviral transcription rate, especially when the provirus integrates in transcriptionally silent region of the host genome. To ensure maximal activation of the LTR, Tat mediates nuclear translocation of NF-kappa-B by interacting with host RELA. Through its interaction with host TBP, Tat may also modulate transcription initiation. Tat can reactivate a latently infected cell by penetrating in it and transactivating its LTR promoter. In the cytoplasm, Tat is thought to act as a translational activator of HIV-1 mRNAs. Functionally, extracellular circulating Tat can be endocytosed by surrounding uninfected cells via the binding to several surface receptors such as CD26, CXCR4, heparan sulfate proteoglycans (HSPG) or LDLR. Neurons are rarely infected, but they internalize Tat via their LDLR. Through its interaction with nuclear HATs, Tat is potentially able to control the acetylation-dependent cellular gene expression. Modulates the expression of many cellular genes involved in cell survival, proliferation or in coding for cytokines or cytokine receptors. Tat plays a role in T-cell and neurons apoptosis. Tat induced neurotoxicity and apoptosis probably contribute to neuroAIDS. Circulating Tat also acts as a chemokine-like and/or growth factor-like molecule that binds to specific receptors on the surface of the cells, affecting many cellular pathways. In the vascular system, Tat binds to ITGAV/ITGB3 and ITGA5/ITGB1 integrins dimers at the surface of endothelial cells and competes with bFGF for heparin-binding sites, leading to an excess of soluble bFGF. The protein is Protein Tat of Homo sapiens (Human).